Here is a 354-residue protein sequence, read N- to C-terminus: Interferon-inducible protein AIM2 (354 aa).

The Pyrin domain maps to 1–87 (MESEYREMLL…ANALEEKKKE (87 aa)). The segment at 95-124 (NTKKRGTQKVENRSQAENCSAASATRSDND) is disordered. Residues 109–120 (QAENCSAASATR) are compositionally biased toward polar residues. The HIN-200 domain maps to 144 to 341 (MVAEQEAIRE…SGPCSFFKVI (198 aa)).

This sequence belongs to the HIN-200 family. In terms of assembly, self-associates; forms homooligomers in response to cytosolic double-stranded DNA (dsDNA) and the dsDNA seems to serve as oligomerization platform. Component of AIM2 inflammasome, which consists of a signal sensor component (AIM2), an adapter (PYCARD/ASC), which recruits an effector pro-inflammatory caspase (CASP1). Interacts (via pyrin domain) with PYCARD/ASC (via pyrin domain); interaction is direct. Component of the AIM2 PANoptosome complex, a multiprotein complex that drives inflammatory cell death (PANoptosis). Interacts with EIF2AK2/PKR. Interacts with MAPRE1. Interacts (via HIN-200 domain) with IFI202 (via HIN-200 domain 2); preventing activation of the AIM2 inflammasome. Interacts with RACK1; promoting association with PP2A phosphatase and dephosphorylation of AKT1. Interacts with TRIM11; promoting AIM2 recruitment to autophagosomes and autophagy-dependent degradation. In terms of processing, degraded via selective autophagy following interaction with TRIM11. As to expression, expressed in developing neurons. Highly expressed in regulatory T-cells (Treg).

It localises to the cytoplasm. The protein resides in the inflammasome. Its subcellular location is the nucleus. Inactive in absence of double-stranded DNA (dsDNA). Homooligomerizes upon binding to dsDNA, dsDNA serving as an oligomerization platform. AIM2 requires large dsDNA to generate a structural template that couples dsDNA ligand-binding and homooligomerization. Homooligomerization is followed by recruitment of PYCARD/ASC to initiate speck formation (nucleation). AIM2 and PYCARD/ASC homooligomer filaments assemble bidirectionally and the recognition between AIM2 and PYCARD/ASC oligomers occurs in a head-to-tail manner. Clustered PYCARD/ASC nucleates the formation of CASP1 filaments through the interaction of their respective CARD domains, acting as a platform for CASP1 polymerization and activation. Active CASP1 then specifically processes protein precursors, such as gasdermin-D (GSDMD), IL1B and IL18, leading to the release of mature cytokines in the extracellular milieu or pyroptosis, depending on cell type. AIM2 can be activated in response to events that cause genomic DNA (HIV protease inhibitor nelfinavir) or mitochondrial DNA release in the cytoplasm (such as Perfluoroalkyl substance pollutants or cholesterol overload). Activation of the AIM2 inflammasome is inhibited by IFI202. Activation of the AIM2 inflammasome is inhibited by TRIM11, which promotes autophagy-dependent degradation of AIM2. In terms of biological role, sensor component of the AIM2 inflammasome, which mediates inflammasome activation in response to the presence of double-stranded DNA (dsDNA) in the cytosol, leading to subsequent pyroptosis. Inflammasomes are supramolecular complexes that assemble in the cytosol in response to pathogens and other damage-associated signals and play critical roles in innate immunity and inflammation. Acts as a recognition receptor (PRR): specifically recognizes and binds dsDNA in the cytosol, and mediates the formation of the inflammasome polymeric complex composed of AIM2, CASP1 and PYCARD/ASC. Recruitment of pro-caspase-1 (proCASP1) to the AIM2 inflammasome promotes caspase-1 (CASP1) activation, which subsequently cleaves and activates inflammatory cytokines IL1B and IL18 and gasdermin-D (GSDMD), promoting cytokine secretion. In some cells, CASP1 activation mediates cleavage and activation of GSDMD, triggering pyroptosis without promoting cytokine secretion. Detects cytosolic dsDNA of viral and bacterial origin in a non-sequence-specific manner. Involved in the DNA damage response caused by acute ionizing radiation by mediating pyroptosis of intestinal epithelial cells and bone marrow cells in response to double-strand DNA breaks. Mechanistically, AIM2 senses DNA damage in the nucleus to mediate inflammasome assembly and inflammatory cell death. Also acts as a regulator of neurodevelopment via its role in the DNA damage response: acts by promoting neural cell death in response to DNA damage in the developing brain, thereby purging genetically compromised cells of the central nervous system. Pyroptosis mediated by the AIM2 inflammasome in response to DNA damage is dependent on GSDMD without involving IL1B and IL18 cytokine secretion. Also acts as a mediator of pyroptosis, necroptosis and apoptosis (PANoptosis), an integral part of host defense against pathogens, in response to bacterial infection. Can also trigger PYCARD/ASC-dependent, caspase-1-independent cell death that involves caspase-8 (CASP8). Also acts as a tumor suppressor independently of its role in inflammatory response. Able to suppress overt cell proliferation in enterocytes: restricts stem cell proliferation in the intestinal mucosa in an inflammasome-independent manner, contributing to a decrease in the likelihood of colorectal cancer development. AIM2 suppresses cell proliferation by inhibiting phosphorylation of AKT1 at 'Ser-473', preventing AKT1 activation and AKT-mTOR signaling pathway. Inhibits AKT1 phosphorylation both by inhibiting the activity of PRKDC/DNA-PK kinase and promoting dephosphorylation by PP2A phosphatase. Also acts as a key regulator of regulatory T-cells (Treg) homeostasis by promoting their stability: acts by preventing AKT1 activation. Its role in Treg homeostasis is important to restain autoimmune diseases. The sequence is that of Interferon-inducible protein AIM2 from Mus musculus (Mouse).